The chain runs to 404 residues: Cysteine desulfurase IscS (404 aa).

Pyridoxal 5'-phosphate is bound by residues 75–76 (AT), asparagine 155, glutamine 183, and 203–205 (SAH). An N6-(pyridoxal phosphate)lysine modification is found at lysine 206. Threonine 243 is a pyridoxal 5'-phosphate binding site. The active-site Cysteine persulfide intermediate is the cysteine 328. Position 328 (cysteine 328) interacts with [2Fe-2S] cluster.

It belongs to the class-V pyridoxal-phosphate-dependent aminotransferase family. NifS/IscS subfamily. As to quaternary structure, homodimer. Forms a heterotetramer with IscU, interacts with other sulfur acceptors. Requires pyridoxal 5'-phosphate as cofactor.

It localises to the cytoplasm. The enzyme catalyses (sulfur carrier)-H + L-cysteine = (sulfur carrier)-SH + L-alanine. It functions in the pathway cofactor biosynthesis; iron-sulfur cluster biosynthesis. Functionally, master enzyme that delivers sulfur to a number of partners involved in Fe-S cluster assembly, tRNA modification or cofactor biosynthesis. Catalyzes the removal of elemental sulfur atoms from cysteine to produce alanine. Functions as a sulfur delivery protein for Fe-S cluster synthesis onto IscU, an Fe-S scaffold assembly protein, as well as other S acceptor proteins. The polypeptide is Cysteine desulfurase IscS (Shewanella loihica (strain ATCC BAA-1088 / PV-4)).